We begin with the raw amino-acid sequence, 429 residues long: Dihydroorotase (429 aa).

2 residues coordinate Zn(2+): histidine 62 and histidine 64. Substrate contacts are provided by residues 64–66 (HFR) and asparagine 96. Residues aspartate 154, histidine 181, and histidine 234 each coordinate Zn(2+). Asparagine 280 is a binding site for substrate. A Zn(2+)-binding site is contributed by aspartate 307. Aspartate 307 is an active-site residue. Substrate is bound by residues histidine 311 and 325–326 (FG).

The protein belongs to the metallo-dependent hydrolases superfamily. DHOase family. Class I DHOase subfamily. It depends on Zn(2+) as a cofactor.

The catalysed reaction is (S)-dihydroorotate + H2O = N-carbamoyl-L-aspartate + H(+). Its pathway is pyrimidine metabolism; UMP biosynthesis via de novo pathway; (S)-dihydroorotate from bicarbonate: step 3/3. Functionally, catalyzes the reversible cyclization of carbamoyl aspartate to dihydroorotate. This chain is Dihydroorotase, found in Latilactobacillus sakei subsp. sakei (strain 23K) (Lactobacillus sakei subsp. sakei).